We begin with the raw amino-acid sequence, 158 residues long: Large ribosomal subunit protein uL30 (158 aa).

This sequence belongs to the universal ribosomal protein uL30 family. As to quaternary structure, part of the 50S ribosomal subunit.

This chain is Large ribosomal subunit protein uL30, found in Saccharolobus islandicus (strain Y.G.57.14 / Yellowstone #1) (Sulfolobus islandicus).